A 982-amino-acid polypeptide reads, in one-letter code: Mitochondrial DNA mismatch repair protein mutS homolog (982 aa).

Residue Ser-698–Ser-705 coordinates ATP. One can recognise an HNH domain in the interval Cys-905–Arg-951.

This sequence belongs to the DNA mismatch repair MutS family.

Its subcellular location is the mitochondrion. May be involved in DNA-mismatch repair. This Sarcophyton glaucum (Toadstool umbrella leather coral) protein is Mitochondrial DNA mismatch repair protein mutS homolog.